A 117-amino-acid polypeptide reads, in one-letter code: Peptidyl-tRNA hydrolase (117 aa).

The protein belongs to the PTH2 family.

Its subcellular location is the cytoplasm. The catalysed reaction is an N-acyl-L-alpha-aminoacyl-tRNA + H2O = an N-acyl-L-amino acid + a tRNA + H(+). Its function is as follows. The natural substrate for this enzyme may be peptidyl-tRNAs which drop off the ribosome during protein synthesis. The sequence is that of Peptidyl-tRNA hydrolase from Thermoplasma volcanium (strain ATCC 51530 / DSM 4299 / JCM 9571 / NBRC 15438 / GSS1).